The chain runs to 433 residues: Tol-Pal system protein TolB (433 aa).

The signal sequence occupies residues 1-26 (MNKLRLFRSFFAFLLPFGMATGAAHG).

It belongs to the TolB family. In terms of assembly, the Tol-Pal system is composed of five core proteins: the inner membrane proteins TolA, TolQ and TolR, the periplasmic protein TolB and the outer membrane protein Pal. They form a network linking the inner and outer membranes and the peptidoglycan layer.

It is found in the periplasm. Part of the Tol-Pal system, which plays a role in outer membrane invagination during cell division and is important for maintaining outer membrane integrity. This Methylobacillus flagellatus (strain ATCC 51484 / DSM 6875 / VKM B-1610 / KT) protein is Tol-Pal system protein TolB.